The chain runs to 543 residues: T-complex protein 1 subunit eta (543 aa).

At methionine 1 the chain carries N-acetylmethionine. Residue glycine 41 participates in ADP binding. An ATP-binding site is contributed by glycine 41. Lysine 67 is subject to N6-acetyllysine. Residue aspartate 92 participates in Mg(2+) binding. Glycine 93, threonine 94, threonine 95, serine 96, serine 164, and serine 165 together coordinate ADP. Glycine 93 provides a ligand contact to ATP. Residue serine 96 coordinates ATP. 2 positions are modified to N6-acetyllysine: lysine 250 and lysine 320. ATP-binding residues include arginine 398 and glycine 409. An ADP-binding site is contributed by glycine 409. Lysine 430 participates in a covalent cross-link: Glycyl lysine isopeptide (Lys-Gly) (interchain with G-Cter in SUMO2). Glutamate 494 and arginine 499 together coordinate ADP. Residue arginine 499 participates in ATP binding. The residue at position 535 (arginine 535) is an Omega-N-methylarginine.

This sequence belongs to the TCP-1 chaperonin family. In terms of assembly, component of the chaperonin-containing T-complex (TRiC), a hexadecamer composed of two identical back-to-back stacked rings enclosing a protein folding chamber. Each ring is made up of eight different subunits: TCP1/CCT1, CCT2, CCT3, CCT4, CCT5, CCT6A/CCT6, CCT7, CCT8. Interacts with PACRG. Interacts with DLEC1.

Its subcellular location is the cytoplasm. It catalyses the reaction ATP + H2O = ADP + phosphate + H(+). Its function is as follows. Component of the chaperonin-containing T-complex (TRiC), a molecular chaperone complex that assists the folding of actin, tubulin and other proteins upon ATP hydrolysis. The TRiC complex mediates the folding of WRAP53/TCAB1, thereby regulating telomere maintenance. The chain is T-complex protein 1 subunit eta (CCT7) from Pongo abelii (Sumatran orangutan).